We begin with the raw amino-acid sequence, 560 residues long: Membrane protein insertase YidC (560 aa).

The next 6 helical transmembrane spans lie at 5 to 25 (IINL…WQYF), 334 to 354 (AIDF…MNFF), 357 to 377 (YVGN…LLMF), 431 to 451 (LPIL…YVTI), 476 to 496 (LFGL…WPIL), and 522 to 542 (FMPL…LIYW).

This sequence belongs to the OXA1/ALB3/YidC family. Type 1 subfamily. Interacts with the Sec translocase complex via SecD. Specifically interacts with transmembrane segments of nascent integral membrane proteins during membrane integration.

It localises to the cell inner membrane. Its function is as follows. Required for the insertion and/or proper folding and/or complex formation of integral membrane proteins into the membrane. Involved in integration of membrane proteins that insert both dependently and independently of the Sec translocase complex, as well as at least some lipoproteins. Aids folding of multispanning membrane proteins. This is Membrane protein insertase YidC from Rickettsia felis (strain ATCC VR-1525 / URRWXCal2) (Rickettsia azadi).